The chain runs to 250 residues: N-acyl homoserine lactonase (250 aa).

The Zn(2+) site is built by His104, His106, Asp108, His109, His169, Asp191, and His235.

It belongs to the metallo-beta-lactamase superfamily. As to quaternary structure, monomer. Zn(2+) serves as cofactor.

The enzyme catalyses an N-acyl-L-homoserine lactone + H2O = an N-acyl-L-homoserine + H(+). Catalyzes hydrolysis of N-hexanoyl-(S)-homoserine lactone, but not the R-enantiomer. Hydrolyzes short- and long-chain N-acyl homoserine lactones with or without 3-oxo substitution at C3, has maximum activity on C10-AHL. The chain is N-acyl homoserine lactonase from Bacillus thuringiensis subsp. indiana.